A 103-amino-acid chain; its full sequence is Integration host factor subunit beta (103 aa).

The disordered stretch occupies residues R59–P82.

Belongs to the bacterial histone-like protein family. In terms of assembly, heterodimer of an alpha and a beta chain.

Functionally, this protein is one of the two subunits of integration host factor, a specific DNA-binding protein that functions in genetic recombination as well as in transcriptional and translational control. This chain is Integration host factor subunit beta, found in Xanthomonas oryzae pv. oryzae (strain MAFF 311018).